The chain runs to 147 residues: Large ribosomal subunit protein uL13 (147 aa).

The protein belongs to the universal ribosomal protein uL13 family. Part of the 50S ribosomal subunit.

Functionally, this protein is one of the early assembly proteins of the 50S ribosomal subunit, although it is not seen to bind rRNA by itself. It is important during the early stages of 50S assembly. The polypeptide is Large ribosomal subunit protein uL13 (Pseudothermotoga lettingae (strain ATCC BAA-301 / DSM 14385 / NBRC 107922 / TMO) (Thermotoga lettingae)).